The primary structure comprises 135 residues: Large ribosomal subunit protein uL16c (135 aa).

This sequence belongs to the universal ribosomal protein uL16 family. In terms of assembly, part of the 50S ribosomal subunit.

The protein localises to the plastid. It is found in the chloroplast. The sequence is that of Large ribosomal subunit protein uL16c from Vitis vinifera (Grape).